The following is a 771-amino-acid chain: Glucocorticoid receptor (771 aa).

The modulating stretch occupies residues 1–415 (MDLKESVTSS…STTTGPPPKL (415 aa)). Phosphothreonine is present on Thr8. Arg22 is modified (omega-N-methylarginine). Phosphoserine is present on residues Ser44, Ser133, Ser199, Ser207, and Ser222. The span at 129–172 (SRSTSVPENPKNSASAVSGTPTEEFPKTQSDLSSEQENLKSQAG) shows a compositional bias: polar residues. A disordered region spans residues 129 to 184 (SRSTSVPENPKNSASAVSGTPTEEFPKTQSDLSSEQENLKSQAGTNGGNVKFPPDQ). Residue Lys254 forms a Glycyl lysine isopeptide (Lys-Gly) (interchain with G-Cter in SUMO2) linkage. Ser263 bears the Phosphoserine mark. Residues Lys273 and Lys289 each participate in a glycyl lysine isopeptide (Lys-Gly) (interchain with G-Cter in SUMO); alternate cross-link. Residues Lys273 and Lys289 each participate in a glycyl lysine isopeptide (Lys-Gly) (interchain with G-Cter in SUMO2); alternate cross-link. Ser303 and Ser400 each carry phosphoserine. The segment at 390–411 (SSPGLRPDVSSPPSSSSTTTGP) is disordered. Over residues 400–409 (SPPSSSSTTT) the composition is skewed to low complexity. A Glycyl lysine isopeptide (Lys-Gly) (interchain with G-Cter in ubiquitin) cross-link involves residue Lys414. 2 NR C4-type zinc fingers span residues 416–436 (CLVCSDELSGCHYGVLTCGSC) and 452–476 (CAGRNDCIIDKIRRENCPACRYRKC). The nuclear receptor DNA-binding region spans 416 to 481 (CLVCSDELSG…RYRKCLQAGM (66 aa)). N6-acetyllysine is present on residues Lys475, Lys487, Lys489, and Lys490. Residues 480–771 (GMNLQARKTK…DIKKLLFHQK (292 aa)) form an interaction with CLOCK region. A hinge region spans residues 482 to 517 (NLQARKTKKKIKGIQQATTGVSQNTSENPNKTIVPA). The NR LBD domain occupies 518–752 (TLPQLTPTLV…FPEMLAEIIT (235 aa)). Residues 526 to 691 (LVSLLEVIEP…EIRMTYIKEL (166 aa)) are interaction with CRY1. A Glycyl lysine isopeptide (Lys-Gly) (interchain with G-Cter in SUMO) cross-link involves residue Lys697.

It belongs to the nuclear hormone receptor family. NR3 subfamily. Heteromultimeric cytoplasmic complex with HSP90AA1, HSPA1A/HSPA1B, and FKBP5 or another immunophilin such as PPID, STIP1, or the immunophilin homolog PPP5C. Upon ligand binding FKBP5 dissociates from the complex and FKBP4 takes its place, thereby linking the complex to dynein and mediating transport to the nucleus, where the complex dissociates. Probably forms a complex composed of chaperones HSP90 and HSP70, co-chaperones CDC37, PPP5C, TSC1 and client protein TSC2, CDK4, AKT, RAF1 and NR3C1; this complex does not contain co-chaperones STIP1/HOP and PTGES3/p23. Directly interacts with UNC45A. Binds to DNA as a homodimer, and as heterodimer with NR3C2 or the retinoid X receptor. Binds STAT5A and STAT5B homodimers and heterodimers. Interacts with NRIP1, POU2F1, POU2F2 and TRIM28. Interacts with several coactivator complexes, including the SMARCA4 complex, CREBBP/EP300, TADA2L (Ada complex) and p160 coactivators such as NCOA2 and NCOA6. Interaction with BAG1 inhibits transactivation. Interacts with HEXIM1 and TGFB1I1. Interacts with NCOA1. Interacts with NCOA3, SMARCA4, SMARCC1, SMARCD1, and SMARCE1. Interacts with CLOCK, CRY1 and CRY2 in a ligand-dependent fashion. Interacts with CIART. Interacts with RWDD3. Interacts with UBE2I/UBC9 and this interaction is enhanced in the presence of RWDD3. Interacts with GRIP1. Interacts with NR4A3 (via nuclear receptor DNA-binding domain), represses transcription activity of NR4A3 on the POMC promoter Nur response element (NurRE). Directly interacts with PNRC2 to attract and form a complex with UPF1 and DCP1A; the interaction leads to rapid mRNA degradation. Interacts with GSK3B. Interacts with FNIP1 and FNIP2. Interacts (via C-terminus) with HNRNPU (via C-terminus). Interacts with MCM3AP. Interacts (via domain NR LBD) with HSP90AA1 and HSP90AB1. In the absence of hormonal ligand, interacts with TACC1. Interacts (via NR LBD domain) with ZNF764 (via KRAB domain); the interaction regulates transcription factor activity of NR3C1 by directing its actions toward certain biologic pathways. In terms of processing, acetylation by CLOCK reduces its binding to glucocorticoid response elements and its transcriptional activity. Post-translationally, increased proteasome-mediated degradation in response to glucocorticoids. Phosphorylated in the absence of hormone; becomes hyperphosphorylated in the presence of glucocorticoid. The Ser-199, Ser-222 and Ser-400-phosphorylated forms are mainly cytoplasmic, and the Ser-207-phosphorylated form is nuclear. Phosphorylation at Ser-207 increases transcriptional activity. Phosphorylation at Ser-199, Ser-222 and Ser-400 decreases signaling capacity. Phosphorylation at Ser-400 may protect from glucocorticoid-induced apoptosis. Phosphorylation at Ser-199 and Ser-207 is not required in regulation of chromosome segregation. May be dephosphorylated by PPP5C, attenuates NR3C1 action. In terms of processing, ubiquitinated by UBR5, leading to its degradation: UBR5 specifically recognizes and binds ligand-bound NR3C1 when it is not associated with coactivators (NCOAs). In presence of NCOAs, the UBR5-degron is not accessible, preventing its ubiquitination and degradation. Post-translationally, sumoylation at Lys-273 and Lys-289 negatively regulates its transcriptional activity. Sumoylation at Lys-697 positively regulates its transcriptional activity in the presence of RWDD3. Sumoylation at Lys-273 and Lys-289 is dispensable whereas sumoylation at Lys-697 is critical for the stimulatory effect of RWDD3 on its transcriptional activity. Heat shock increases sumoylation in a RWDD3-dependent manner.

The protein localises to the cytoplasm. The protein resides in the nucleus. Its subcellular location is the mitochondrion. It is found in the cytoskeleton. It localises to the spindle. The protein localises to the microtubule organizing center. The protein resides in the centrosome. Its subcellular location is the chromosome. It is found in the nucleoplasm. Functionally, receptor for glucocorticoids (GC). Has a dual mode of action: as a transcription factor that binds to glucocorticoid response elements (GRE), both for nuclear and mitochondrial DNA, and as a modulator of other transcription factors. Affects inflammatory responses, cellular proliferation and differentiation in target tissues. Involved in chromatin remodeling. Plays a role in rapid mRNA degradation by binding to the 5' UTR of target mRNAs and interacting with PNRC2 in a ligand-dependent manner which recruits the RNA helicase UPF1 and the mRNA-decapping enzyme DCP1A, leading to RNA decay. Could act as a coactivator for STAT5-dependent transcription upon growth hormone (GH) stimulation and could reveal an essential role of hepatic GR in the control of body growth. Mediates glucocorticoid-induced apoptosis. Promotes accurate chromosome segregation during mitosis. May act as a tumor suppressor. May play a negative role in adipogenesis through the regulation of lipolytic and antilipogenic gene expression. This Cavia porcellus (Guinea pig) protein is Glucocorticoid receptor (NR3C1).